We begin with the raw amino-acid sequence, 197 residues long: Probable GTP-binding protein EngB (197 aa).

The EngB-type G domain occupies 2-186 (KVKEVIFAGR…KRDLKQYLLS (185 aa)). Residues 10-17 (GRSNVGKS), 35-39 (GTTIR), 52-55 (DLPG), 132-135 (NKMD), and 166-168 (VCA) contribute to the GTP site. Mg(2+) contacts are provided by Ser17 and Thr37.

Belongs to the TRAFAC class TrmE-Era-EngA-EngB-Septin-like GTPase superfamily. EngB GTPase family. It depends on Mg(2+) as a cofactor.

Its function is as follows. Necessary for normal cell division and for the maintenance of normal septation. The polypeptide is Probable GTP-binding protein EngB (Archaeoglobus fulgidus (strain ATCC 49558 / DSM 4304 / JCM 9628 / NBRC 100126 / VC-16)).